The primary structure comprises 143 residues: Large ribosomal subunit protein uL11 (143 aa).

The protein belongs to the universal ribosomal protein uL11 family. Part of the ribosomal stalk of the 50S ribosomal subunit. Interacts with L10 and the large rRNA to form the base of the stalk. L10 forms an elongated spine to which L12 dimers bind in a sequential fashion forming a multimeric L10(L12)X complex. Post-translationally, one or more lysine residues are methylated.

Its function is as follows. Forms part of the ribosomal stalk which helps the ribosome interact with GTP-bound translation factors. The polypeptide is Large ribosomal subunit protein uL11 (Bifidobacterium longum subsp. infantis (strain ATCC 15697 / DSM 20088 / JCM 1222 / NCTC 11817 / S12)).